The chain runs to 69 residues: Putative transmembrane protein ORF34 (69 aa).

2 consecutive transmembrane segments (helical) span residues Leu7–Phe27 and Val42–Phe62.

It is found in the host membrane. This chain is Putative transmembrane protein ORF34, found in Haloarcula hispanica (His1V).